We begin with the raw amino-acid sequence, 394 residues long: Aspergillopepsin-1 (394 aa).

Positions 1–20 are cleaved as a signal peptide; sequence MVVFSKVTAAVFGLATIASA. A propeptide spans 21 to 69 (activation peptide); sequence APAPPTRKGFTVQQQARPAQKKQVNLPAMYAHALTKFGGSVPESVKVAA. In terms of domain architecture, Peptidase A1 spans 85–391; it reads YLTPVNVGGT…DSEGPRLGFA (307 aa). Active-site residues include Asp101 and Asp283. The cysteines at positions 319 and 354 are disulfide-linked.

This sequence belongs to the peptidase A1 family. As to quaternary structure, monomer.

The protein resides in the secreted. It catalyses the reaction Hydrolysis of proteins with broad specificity. Generally favors hydrophobic residues in P1 and P1', but also accepts Lys in P1, which leads to activation of trypsinogen. Does not clot milk.. Functionally, secreted aspartic endopeptidase that allows assimilation of proteinaceous substrates. The scissile peptide bond is attacked by a nucleophilic water molecule activated by two aspartic residues in the active site. Shows a broad primary substrate specificity. Favors hydrophobic residues at the P1 and P1' positions, but also accepts a lysine residue in the P1 position, leading to the activation of trypsinogen and chymotrypsinogen A. This is Aspergillopepsin-1 (pepA) from Aspergillus clavatus (strain ATCC 1007 / CBS 513.65 / DSM 816 / NCTC 3887 / NRRL 1 / QM 1276 / 107).